Reading from the N-terminus, the 168-residue chain is Transcription antitermination protein NusB (168 aa).

The protein belongs to the NusB family.

Its function is as follows. Involved in transcription antitermination. Required for transcription of ribosomal RNA (rRNA) genes. Binds specifically to the boxA antiterminator sequence of the ribosomal RNA (rrn) operons. In Prosthecochloris aestuarii (strain DSM 271 / SK 413), this protein is Transcription antitermination protein NusB.